The chain runs to 378 residues: Metalloendoproteinase 2-MMP (378 aa).

The N-terminal stretch at 1-20 (MRFCVFGFLSLFLIVSPASA) is a signal peptide. The propeptide at 21–154 (WFFPNSTAVP…SRTHLHAVKR (134 aa)) is activation peptide. 5 N-linked (GlcNAc...) asparagine glycosylation sites follow: N25, N35, N46, N79, and N102. Positions 118–125 (PRCGNPDV) match the Cysteine switch motif. C120 contacts Zn(2+). N-linked (GlcNAc...) asparagine glycosylation is found at N127, N143, and N203. H280 serves as a coordination point for Zn(2+). E281 is a catalytic residue. H284 and H290 together coordinate Zn(2+). Residue N330 is glycosylated (N-linked (GlcNAc...) asparagine). A lipid anchor (GPI-anchor amidated serine) is attached at S349. The propeptide at 350–378 (AAWRIDGSSRSTIVSLLLSTVGLVLWFLP) is removed in mature form.

This sequence belongs to the peptidase M10A family. Matrix metalloproteinases (MMPs) subfamily. Zn(2+) serves as cofactor. As to expression, mostly expressed in roots, and, to a lower extent, in flowers, leaves and stems.

The protein resides in the cell membrane. With respect to regulation, repressed by acetohydroxamic acid (AHA). Its function is as follows. Matrix metalloproteinases (MMPs) or matrixins may play a role in the degradation and remodeling of the extracellular matrix (ECM) during development or in response to stresses. Required for plant growth, morphogenesis, and development with particular relevance for flowering and senescence. Active on McaPLGLDpaAR-NH(2) (QF24) and myelin basic protein (MBP) and, to some extent, on beta-casein. The sequence is that of Metalloendoproteinase 2-MMP from Arabidopsis thaliana (Mouse-ear cress).